Consider the following 235-residue polypeptide: 2-C-methyl-D-erythritol 4-phosphate cytidylyltransferase (235 aa).

This sequence belongs to the IspD/TarI cytidylyltransferase family. IspD subfamily.

It carries out the reaction 2-C-methyl-D-erythritol 4-phosphate + CTP + H(+) = 4-CDP-2-C-methyl-D-erythritol + diphosphate. Its pathway is isoprenoid biosynthesis; isopentenyl diphosphate biosynthesis via DXP pathway; isopentenyl diphosphate from 1-deoxy-D-xylulose 5-phosphate: step 2/6. Its function is as follows. Catalyzes the formation of 4-diphosphocytidyl-2-C-methyl-D-erythritol from CTP and 2-C-methyl-D-erythritol 4-phosphate (MEP). In Mycolicibacterium paratuberculosis (strain ATCC BAA-968 / K-10) (Mycobacterium paratuberculosis), this protein is 2-C-methyl-D-erythritol 4-phosphate cytidylyltransferase.